The following is a 29-amino-acid chain: Kappa-theraphotoxin-Ps1a (29 aa).

Disulfide bonds link cysteine 2–cysteine 16, cysteine 9–cysteine 21, and cysteine 15–cysteine 25. At isoleucine 29 the chain carries Isoleucine amide.

This sequence belongs to the neurotoxin 30 (phrixotoxin) family. In terms of tissue distribution, expressed by the venom gland.

Its subcellular location is the secreted. Potent and specific blocker of Kv4.2/KCND2 (IC(50)=5 nM) and Kv4.3/KCND3 (IC(50)=28 nM) potassium channels. Acts by altering the gating properties of these channels. Also shows moderate inhibition on human voltage-gated sodium channel Nav1.7/SCN9A activation (IC(50)=423 nM). This is Kappa-theraphotoxin-Ps1a from Paraphysa scrofa (Chilean copper tarantula).